Here is a 188-residue protein sequence, read N- to C-terminus: dCTP deaminase (188 aa).

DCTP contacts are provided by residues 111–116 (KSTYAR), 135–137 (TLE), Gln-156, Tyr-170, and Gln-180. The active-site Proton donor/acceptor is Glu-137.

It belongs to the dCTP deaminase family. As to quaternary structure, homotrimer.

It catalyses the reaction dCTP + H2O + H(+) = dUTP + NH4(+). It functions in the pathway pyrimidine metabolism; dUMP biosynthesis; dUMP from dCTP (dUTP route): step 1/2. In terms of biological role, catalyzes the deamination of dCTP to dUTP. This is dCTP deaminase from Laribacter hongkongensis (strain HLHK9).